The sequence spans 291 residues: MNTVVNISNEGKTEDLESVKRPVIYPEEEEKAEESESSIDIDALLILSTVTVWAFRLLFERALGNLFFYIVGWGNLGYLVYSTIRRLFLKSEESRDKGLDVSDIMAIMCLLLHLFMFTLLVCNSFVFSGSIGNIADVIIRNPLGILMASRNFLDSQQMMESQRAYYVSLTVVQMAFAIVLAVTFDYGNDAVAPLELLRALLLLMLVGTTFCYIEDVVIRNLKISKEKVKRFRLLAKMMLVIGCTTAGYYMMDRMFKLATTEMASTVPTPTAPRYPLASTVPPYTLLDGEYC.

It to E.cuniculi ECU03_0120.

This is an uncharacterized protein from Encephalitozoon cuniculi (strain GB-M1) (Microsporidian parasite).